We begin with the raw amino-acid sequence, 342 residues long: N-acetyl-gamma-glutamyl-phosphate reductase (342 aa).

The active site involves Cys-149.

The protein belongs to the NAGSA dehydrogenase family. Type 1 subfamily.

Its subcellular location is the cytoplasm. The enzyme catalyses N-acetyl-L-glutamate 5-semialdehyde + phosphate + NADP(+) = N-acetyl-L-glutamyl 5-phosphate + NADPH + H(+). It functions in the pathway amino-acid biosynthesis; L-arginine biosynthesis; N(2)-acetyl-L-ornithine from L-glutamate: step 3/4. Functionally, catalyzes the NADPH-dependent reduction of N-acetyl-5-glutamyl phosphate to yield N-acetyl-L-glutamate 5-semialdehyde. The protein is N-acetyl-gamma-glutamyl-phosphate reductase of Aromatoleum aromaticum (strain DSM 19018 / LMG 30748 / EbN1) (Azoarcus sp. (strain EbN1)).